A 258-amino-acid chain; its full sequence is 4-hydroxy-tetrahydrodipicolinate reductase (258 aa).

NAD(+)-binding positions include 8-13, 86-88, and 110-113; these read GGSGKM, GTT, and ATNM. The Proton donor/acceptor role is filled by His-142. Residue His-143 coordinates (S)-2,3,4,5-tetrahydrodipicolinate. Lys-146 (proton donor) is an active-site residue. 152-153 lines the (S)-2,3,4,5-tetrahydrodipicolinate pocket; sequence GT.

This sequence belongs to the DapB family.

The protein localises to the cytoplasm. It carries out the reaction (S)-2,3,4,5-tetrahydrodipicolinate + NAD(+) + H2O = (2S,4S)-4-hydroxy-2,3,4,5-tetrahydrodipicolinate + NADH + H(+). The catalysed reaction is (S)-2,3,4,5-tetrahydrodipicolinate + NADP(+) + H2O = (2S,4S)-4-hydroxy-2,3,4,5-tetrahydrodipicolinate + NADPH + H(+). Its pathway is amino-acid biosynthesis; L-lysine biosynthesis via DAP pathway; (S)-tetrahydrodipicolinate from L-aspartate: step 4/4. In terms of biological role, catalyzes the conversion of 4-hydroxy-tetrahydrodipicolinate (HTPA) to tetrahydrodipicolinate. This chain is 4-hydroxy-tetrahydrodipicolinate reductase, found in Campylobacter hominis (strain ATCC BAA-381 / DSM 21671 / CCUG 45161 / LMG 19568 / NCTC 13146 / CH001A).